The chain runs to 145 residues: I-leader protein (145 aa).

It belongs to the adenoviridae leader protein family.

The protein localises to the host cytoplasm. It localises to the host perinuclear region. This chain is I-leader protein, found in Human adenovirus C serotype 5 (HAdV-5).